An 860-amino-acid polypeptide reads, in one-letter code: DNA gyrase subunit A (860 aa).

The Topo IIA-type catalytic domain occupies 34 to 503; sequence LPDARDGLKP…EDGELIDTDL (470 aa). The O-(5'-phospho-DNA)-tyrosine intermediate role is filled by Tyr122. Positions 530–536 match the GyrA-box motif; that stretch reads QNRATRG.

The protein belongs to the type II topoisomerase GyrA/ParC subunit family. As to quaternary structure, heterotetramer, composed of two GyrA and two GyrB chains. In the heterotetramer, GyrA contains the active site tyrosine that forms a transient covalent intermediate with DNA, while GyrB binds cofactors and catalyzes ATP hydrolysis.

It is found in the cytoplasm. The catalysed reaction is ATP-dependent breakage, passage and rejoining of double-stranded DNA.. Functionally, a type II topoisomerase that negatively supercoils closed circular double-stranded (ds) DNA in an ATP-dependent manner to modulate DNA topology and maintain chromosomes in an underwound state. Negative supercoiling favors strand separation, and DNA replication, transcription, recombination and repair, all of which involve strand separation. Also able to catalyze the interconversion of other topological isomers of dsDNA rings, including catenanes and knotted rings. Type II topoisomerases break and join 2 DNA strands simultaneously in an ATP-dependent manner. In Synechocystis sp. (strain ATCC 27184 / PCC 6803 / Kazusa), this protein is DNA gyrase subunit A.